The primary structure comprises 354 residues: Inactive ADP-ribosyltransferase ARH2 (354 aa).

Ser27 is modified (phosphoserine).

The protein belongs to the ADP-ribosylglycohydrolase family.

It localises to the cytoplasm. The protein resides in the myofibril. Its subcellular location is the sarcomere. Required for myofibril assembly and outgrowth of the cardiac chambers in the developing heart. Appears to be catalytically inactive, showing no activity against O-acetyl-ADP-ribose. This Bos taurus (Bovine) protein is Inactive ADP-ribosyltransferase ARH2 (ADPRHL1).